Consider the following 176-residue polypeptide: MNTCTPNIKPSYDYNDLLASGRGELFGSEGPQLPAPSMLMMDRITKITDKEGLFEKGYIEAELDINQDLPFFGCHFIGDPVMPGCLGLDAMWQLVGFYLGWVGGKGKGRALGVGEVKFTGQILPTAKKVIYRINMKRVINRKLVMGLADGEVEVDGRIIYTATDLKVGLFQDTTSF.

The active site involves H75.

This sequence belongs to the thioester dehydratase family. FabA subfamily. In terms of assembly, homodimer.

It localises to the cytoplasm. It catalyses the reaction a (3R)-hydroxyacyl-[ACP] = a (2E)-enoyl-[ACP] + H2O. The catalysed reaction is (3R)-hydroxydecanoyl-[ACP] = (2E)-decenoyl-[ACP] + H2O. It carries out the reaction (2E)-decenoyl-[ACP] = (3Z)-decenoyl-[ACP]. It functions in the pathway lipid metabolism; fatty acid biosynthesis. Functionally, necessary for the introduction of cis unsaturation into fatty acids. Catalyzes the dehydration of (3R)-3-hydroxydecanoyl-ACP to E-(2)-decenoyl-ACP and then its isomerization to Z-(3)-decenoyl-ACP. Can catalyze the dehydratase reaction for beta-hydroxyacyl-ACPs with saturated chain lengths up to 16:0, being most active on intermediate chain length. This is 3-hydroxydecanoyl-[acyl-carrier-protein] dehydratase from Glaesserella parasuis serovar 5 (strain SH0165) (Haemophilus parasuis).